A 275-amino-acid chain; its full sequence is 4-diphosphocytidyl-2-C-methyl-D-erythritol kinase (275 aa).

The active site involves Lys9. Position 90 to 100 (90 to 100 (PVGGGLGGGSS)) interacts with ATP. Asp132 is an active-site residue.

Belongs to the GHMP kinase family. IspE subfamily.

The enzyme catalyses 4-CDP-2-C-methyl-D-erythritol + ATP = 4-CDP-2-C-methyl-D-erythritol 2-phosphate + ADP + H(+). It participates in isoprenoid biosynthesis; isopentenyl diphosphate biosynthesis via DXP pathway; isopentenyl diphosphate from 1-deoxy-D-xylulose 5-phosphate: step 3/6. In terms of biological role, catalyzes the phosphorylation of the position 2 hydroxy group of 4-diphosphocytidyl-2C-methyl-D-erythritol. The polypeptide is 4-diphosphocytidyl-2-C-methyl-D-erythritol kinase (Sulfurihydrogenibium sp. (strain YO3AOP1)).